Reading from the N-terminus, the 468-residue chain is Transmembrane protein 151A (468 aa).

The disordered stretch occupies residues 1 to 20 (MPEGEGGDCGEVPALVPDGE). Transmembrane regions (helical) follow at residues 45-65 (CLLL…CRLA) and 98-118 (YLYI…AECW). The tract at residues 384–438 (VSSNSLPPARPSGPRLPFSRSRLSLGAGGRTTPGVFRSLSGGPLGRRGEDTEPLE) is disordered.

Belongs to the TMEM151 family. As to expression, highly expressed in the central nervous system (CNS) including the cerebral cortex, hippocampus, spinal cord, brainstem, and thalamus. Expression is relatively low during postnatal stages but highly expressed at postnatal day 14 (P14), and declined in adulthood. Also expressed in the stomach, heart, liver, spleen, lung, kidney, and muscle.

The protein localises to the endoplasmic reticulum membrane. The protein resides in the cell projection. It is found in the axon. Its subcellular location is the dendrite. The protein is Transmembrane protein 151A (Tmem151a) of Mus musculus (Mouse).